The primary structure comprises 423 residues: Gamma-glutamyl phosphate reductase (423 aa).

The protein belongs to the gamma-glutamyl phosphate reductase family.

It is found in the cytoplasm. It catalyses the reaction L-glutamate 5-semialdehyde + phosphate + NADP(+) = L-glutamyl 5-phosphate + NADPH + H(+). Its pathway is amino-acid biosynthesis; L-proline biosynthesis; L-glutamate 5-semialdehyde from L-glutamate: step 2/2. Functionally, catalyzes the NADPH-dependent reduction of L-glutamate 5-phosphate into L-glutamate 5-semialdehyde and phosphate. The product spontaneously undergoes cyclization to form 1-pyrroline-5-carboxylate. The protein is Gamma-glutamyl phosphate reductase of Brucella suis (strain ATCC 23445 / NCTC 10510).